The sequence spans 738 residues: Adhesion G protein-coupled receptor L4 (738 aa).

Positions 1 to 19 (MRLLLLLVGLSTLLNHSYT) are cleaved as a signal peptide. The region spanning 20 to 56 (QNCKTPCLPNAKCEVLDEVAACFCSTGYTGNGITICE) is the EGF-like 1 domain. Topologically, residues 20 to 480 (QNCKTPCLPN…DYNILTRITQ (461 aa)) are extracellular. Disulfide bonds link C22/C32, C26/C41, C43/C55, C61/C73, C67/C82, C84/C105, C111/C123, C117/C132, and C134/C155. In terms of domain architecture, EGF-like 2; calcium-binding spans 57 to 106 (DVDECNETSVCGDHAVCENTNGGFSCFCVEGYQTSTGKTQFTPNDGSYCQ). N-linked (GlcNAc...) asparagine glycosylation occurs at N62. One can recognise an EGF-like 3; calcium-binding domain in the interval 107–156 (DVDECNETSVCGDHAVCENTNGGFSCFCVEGYQTSTGKTQFTPNDGSYCQ). The N-linked (GlcNAc...) asparagine glycan is linked to N112. N-linked (GlcNAc...) asparagine glycans are attached at residues N175, N226, N297, N421, N429, and N443. Positions 292-467 (TQFDMNSTDL…AILMSPSTSI (176 aa)) constitute a GAIN-B domain. Intrachain disulfides connect C417–C449 and C437–C451. The segment at 417–467 (CAFWNYSVDDMNNGSWSSEGCELTYSNDTHTSCRCSHLTHFAILMSPSTSI) is GPS. Residues 481-501 (LGIIISLICLAICIFTFWFFS) traverse the membrane as a helical segment. Over 502–522 (EIQSTRTTIHKNLCCSLFLAQ) the chain is Cytoplasmic. A helical transmembrane segment spans residues 523–543 (LVFLVGININTNKLVCSIIAG). Residues 544–547 (LLHY) are Extracellular-facing. A helical transmembrane segment spans residues 548–568 (FFLAAFAWMCIEGIYLYLIVV). At 569-580 (GLIYNKGFLHKN) the chain is on the cytoplasmic side. A helical membrane pass occupies residues 581 to 601 (FYIFGYLSPAVVVGFSASLGY). At 602–621 (RYYGTTKVCWLSTENNFIWS) the chain is on the extracellular side. A helical transmembrane segment spans residues 622–642 (FIGPACLIILVNLLAFGVIIY). The Cytoplasmic segment spans residues 643 to 666 (KVFRHTAGLKPEVSCYENIRSCAR). Residues 667–687 (GALALLFLLGTTWTFGVLHVV) traverse the membrane as a helical segment. The Extracellular segment spans residues 688 to 694 (HASVVTA). Residues 695-715 (YLFTVSNAFQGMFIFLFLCVL) form a helical membrane-spanning segment. Residues 716–738 (SRKIQEEYYRLFKNVPCCFECLR) lie on the Cytoplasmic side of the membrane.

It belongs to the G-protein coupled receptor 2 family. Adhesion G-protein coupled receptor (ADGR) subfamily. In terms of assembly, heterodimer of 2 chains generated by proteolytic processing; the large extracellular N-terminal fragment and the membrane-bound C-terminal fragment predominantly remain associated and non-covalently linked. In terms of processing, proteolytically cleaved into 2 subunits, an extracellular alpha subunit and a seven-transmembrane subunit. Post-translationally, glycosylated. As to expression, abundantly expressed in heart, lung, and kidney. Less evident expression is observed in brain, skeletal muscle, liver and spleen. No expression is detected in testis.

The protein localises to the cell membrane. In terms of biological role, endothelial orphan receptor that acts as a key regulator of angiogenesis. This is Adhesion G protein-coupled receptor L4 (Adgrl4) from Rattus norvegicus (Rat).